The following is a 1235-amino-acid chain: ATP-dependent helicase/nuclease subunit A (1235 aa).

In terms of domain architecture, UvrD-like helicase ATP-binding spans A12–R482. ATP is bound at residue A33 to T40. The 292-residue stretch at A509 to G800 folds into the UvrD-like helicase C-terminal domain.

This sequence belongs to the helicase family. AddA subfamily. In terms of assembly, heterodimer of AddA and AddB/RexB. Requires Mg(2+) as cofactor.

The enzyme catalyses Couples ATP hydrolysis with the unwinding of duplex DNA by translocating in the 3'-5' direction.. The catalysed reaction is ATP + H2O = ADP + phosphate + H(+). Its function is as follows. The heterodimer acts as both an ATP-dependent DNA helicase and an ATP-dependent, dual-direction single-stranded exonuclease. Recognizes the chi site generating a DNA molecule suitable for the initiation of homologous recombination. The AddA nuclease domain is required for chi fragment generation; this subunit has the helicase and 3' -&gt; 5' nuclease activities. This is ATP-dependent helicase/nuclease subunit A from Listeria innocua serovar 6a (strain ATCC BAA-680 / CLIP 11262).